The sequence spans 331 residues: Fructose-1,6-bisphosphatase class 1 2 (331 aa).

Glu-91, Asp-112, Leu-114, and Asp-115 together coordinate Mg(2+). Residues 115-118 (DGSS), Asn-207, Tyr-238, and Lys-268 contribute to the substrate site. Glu-274 is a binding site for Mg(2+).

The protein belongs to the FBPase class 1 family. In terms of assembly, homotetramer. Mg(2+) serves as cofactor.

It localises to the cytoplasm. The enzyme catalyses beta-D-fructose 1,6-bisphosphate + H2O = beta-D-fructose 6-phosphate + phosphate. It functions in the pathway carbohydrate biosynthesis; Calvin cycle. The polypeptide is Fructose-1,6-bisphosphatase class 1 2 (Acaryochloris marina (strain MBIC 11017)).